Reading from the N-terminus, the 173-residue chain is MKTWHMVVVIGFLATLAQTSLALKEEDCEVCVKTVRRFADSLDDSTKKDYKQIETVFKKFCKTQKNKEHRFCYYLGGLEESATGILNELSKPLSWSMPAEKICEKLKKKDAQICDLRYEKQIDLNSVDLKKLKVRDLKKILNDWDESCDGCLEKGDFIKRIEELKPKYSRSEL.

An N-terminal signal peptide occupies residues 1-22; the sequence is MKTWHMVVVIGFLATLAQTSLA. 4 disulfides stabilise this stretch: Cys-28/Cys-114, Cys-31/Cys-103, Cys-61/Cys-72, and Cys-148/Cys-151.

The protein belongs to the ARMET family.

It localises to the secreted. Functionally, required during the maturation of the embryonic nervous system for maintenance of neuronal and cuticular connectivity. Essential for maintenance of dopaminergic neurons and dopamine levels. This is Mesencephalic astrocyte-derived neurotrophic factor homolog from Drosophila sechellia (Fruit fly).